The sequence spans 224 residues: Deoxyribose-phosphate aldolase (224 aa).

D92 serves as the catalytic Proton donor/acceptor. K155 (schiff-base intermediate with acetaldehyde) is an active-site residue. The active-site Proton donor/acceptor is the K184.

It belongs to the DeoC/FbaB aldolase family. DeoC type 1 subfamily.

It localises to the cytoplasm. The enzyme catalyses 2-deoxy-D-ribose 5-phosphate = D-glyceraldehyde 3-phosphate + acetaldehyde. The protein operates within carbohydrate degradation; 2-deoxy-D-ribose 1-phosphate degradation; D-glyceraldehyde 3-phosphate and acetaldehyde from 2-deoxy-alpha-D-ribose 1-phosphate: step 2/2. Catalyzes a reversible aldol reaction between acetaldehyde and D-glyceraldehyde 3-phosphate to generate 2-deoxy-D-ribose 5-phosphate. The sequence is that of Deoxyribose-phosphate aldolase from Clostridium perfringens (strain 13 / Type A).